A 352-amino-acid chain; its full sequence is Beta-hexosaminidase (352 aa).

Substrate-binding positions include Asp-74, Arg-82, Arg-149, and Lys-179–His-180. His-192 serves as the catalytic Proton donor/acceptor. Residue Asp-263 is the Nucleophile of the active site.

It belongs to the glycosyl hydrolase 3 family. NagZ subfamily.

It localises to the cytoplasm. The enzyme catalyses Hydrolysis of terminal non-reducing N-acetyl-D-hexosamine residues in N-acetyl-beta-D-hexosaminides.. It functions in the pathway cell wall biogenesis; peptidoglycan recycling. Functionally, plays a role in peptidoglycan recycling by cleaving the terminal beta-1,4-linked N-acetylglucosamine (GlcNAc) from peptide-linked peptidoglycan fragments, giving rise to free GlcNAc, anhydro-N-acetylmuramic acid and anhydro-N-acetylmuramic acid-linked peptides. The protein is Beta-hexosaminidase of Bordetella pertussis (strain Tohama I / ATCC BAA-589 / NCTC 13251).